A 184-amino-acid chain; its full sequence is Large ribosomal subunit protein uL6 (184 aa).

This sequence belongs to the universal ribosomal protein uL6 family. As to quaternary structure, part of the 50S ribosomal subunit.

This protein binds to the 23S rRNA, and is important in its secondary structure. It is located near the subunit interface in the base of the L7/L12 stalk, and near the tRNA binding site of the peptidyltransferase center. The polypeptide is Large ribosomal subunit protein uL6 (Pyrococcus furiosus (strain ATCC 43587 / DSM 3638 / JCM 8422 / Vc1)).